The following is a 93-amino-acid chain: MATFKKFNKDKRPKRNTQSLLFKRKRFCRFTVAGVEEIDYKDVDTLRDFIAENGKIIPARLTGTRAIYQRQLNTAIKRARFLALVPYSDQHKI.

This sequence belongs to the bacterial ribosomal protein bS18 family. As to quaternary structure, part of the 30S ribosomal subunit. Forms a tight heterodimer with protein bS6.

In terms of biological role, binds as a heterodimer with protein bS6 to the central domain of the 16S rRNA, where it helps stabilize the platform of the 30S subunit. In Paracidovorax citrulli (strain AAC00-1) (Acidovorax citrulli), this protein is Small ribosomal subunit protein bS18.